A 413-amino-acid polypeptide reads, in one-letter code: Multifunctional CCA protein (413 aa).

Glycine 8 and arginine 11 together coordinate ATP. CTP is bound by residues glycine 8 and arginine 11. The Mg(2+) site is built by aspartate 21 and aspartate 23. Residues arginine 91, arginine 137, and arginine 140 each coordinate ATP. CTP-binding residues include arginine 91, arginine 137, and arginine 140. Residues 228-329 (TGLHTLMTVT…VKLFDSIDAW (102 aa)) form the HD domain.

This sequence belongs to the tRNA nucleotidyltransferase/poly(A) polymerase family. Bacterial CCA-adding enzyme type 1 subfamily. In terms of assembly, monomer. Can also form homodimers and oligomers. It depends on Mg(2+) as a cofactor. Requires Ni(2+) as cofactor.

The catalysed reaction is a tRNA precursor + 2 CTP + ATP = a tRNA with a 3' CCA end + 3 diphosphate. It carries out the reaction a tRNA with a 3' CCA end + 2 CTP + ATP = a tRNA with a 3' CCACCA end + 3 diphosphate. Its function is as follows. Catalyzes the addition and repair of the essential 3'-terminal CCA sequence in tRNAs without using a nucleic acid template. Adds these three nucleotides in the order of C, C, and A to the tRNA nucleotide-73, using CTP and ATP as substrates and producing inorganic pyrophosphate. tRNA 3'-terminal CCA addition is required both for tRNA processing and repair. Also involved in tRNA surveillance by mediating tandem CCA addition to generate a CCACCA at the 3' terminus of unstable tRNAs. While stable tRNAs receive only 3'-terminal CCA, unstable tRNAs are marked with CCACCA and rapidly degraded. The protein is Multifunctional CCA protein of Klebsiella pneumoniae (strain 342).